The sequence spans 509 residues: Maturase K (509 aa).

It belongs to the intron maturase 2 family. MatK subfamily.

The protein resides in the plastid. It is found in the chloroplast. Its function is as follows. Usually encoded in the trnK tRNA gene intron. Probably assists in splicing its own and other chloroplast group II introns. This Pereskia aculeata (Barbados gooseberry) protein is Maturase K.